Consider the following 1141-residue polypeptide: DNA-directed RNA polymerase subunit beta (1141 aa).

Composition is skewed to acidic residues over residues glutamate 1063–serine 1074 and glycine 1096–glutamate 1141. Residues glutamate 1063 to glutamate 1141 are disordered.

It belongs to the RNA polymerase beta chain family. In terms of assembly, the RNAP catalytic core consists of 2 alpha, 1 beta, 1 beta' and 1 omega subunit. When a sigma factor is associated with the core the holoenzyme is formed, which can initiate transcription.

The catalysed reaction is RNA(n) + a ribonucleoside 5'-triphosphate = RNA(n+1) + diphosphate. Its function is as follows. DNA-dependent RNA polymerase catalyzes the transcription of DNA into RNA using the four ribonucleoside triphosphates as substrates. The protein is DNA-directed RNA polymerase subunit beta of Moorella thermoacetica (strain ATCC 39073 / JCM 9320).